The chain runs to 611 residues: Pleckstrin homology domain-containing family N member 1 (611 aa).

The segment at 1–45 is disordered; it reads MGNSHCVPQAPRRLRASFSRKPSLKGNREDSARMSAGLPGPEAAR. A lipid anchor (N-myristoyl glycine) is attached at Gly2. An interaction with C1QBP region spans residues 61-100; that stretch reads TDILDLENQRENLEQPFLSVFKKGRRRVPVRNLGKVVHYA. 2 PH domains span residues 96-192 and 222-319; these read VVHY…TALL and AVCA…THRE. Tyr302 is subject to Phosphotyrosine. 3 disordered regions span residues 323–424, 438–468, and 483–611; these read PLPG…PVTP, ESSPDAPDHTSETSHSPLYADPYTPPATSHR, and MQSA…VQWI. The span at 341-350 shows a compositional bias: low complexity; sequence GSLSSGGQTS. A compositionally biased stretch (polar residues) spans 360–391; the sequence is STRTSHSLPESSVPSTVGCSSQHTPDQANSDR. Residue Tyr456 is modified to Phosphotyrosine. Residues 498–509 are compositionally biased toward low complexity; the sequence is VPVSVPASDPRS. Residue Ser559 is modified to Phosphoserine. The segment covering 570–585 has biased composition (basic and acidic residues); it reads RSPRRSRDPGYDHLWD.

As to quaternary structure, found in a complex with cytochrome c mRNA and various ribosomal proteins. Interacts with C1QBP. Interacts with ELAVL1. Interacts with BID. In terms of processing, phosphorylation is essential for its mitochondrial localization and regulates its interaction with C1QBP. In terms of tissue distribution, ubiquitous. Epressed in several cancer cell lines of differing origin.

It is found in the cell membrane. It localises to the mitochondrion. The protein localises to the mitochondrion membrane. Functionally, controls the stability of the leptin mRNA harboring an AU-rich element (ARE) in its 3' UTR, in cooperation with the RNA stabilizer ELAVL1. Decreases the stability of the leptin mRNA by antagonizing the function of ELAVL1 by inducing its atypical recruitment from the nucleus to the cytosol. Binds to cardiolipin (CL), phosphatidic acid (PA), phosphatidylinositol 4-phosphate (PtdIns(4)P) and phosphatidylserine (PS). Promotes apoptosis by enhancing BAX-BAK hetero-oligomerization via interaction with BID in colon cancer cells. This Homo sapiens (Human) protein is Pleckstrin homology domain-containing family N member 1 (PLEKHN1).